Consider the following 406-residue polypeptide: Tyrosine--tRNA ligase (406 aa).

Tyrosine 35 lines the L-tyrosine pocket. Residues 40-49 carry the 'HIGH' region motif; the sequence is PTADSLHIGH. Residues tyrosine 168 and glutamine 172 each contribute to the L-tyrosine site. The short motif at 228–232 is the 'KMSKS' region element; that stretch reads KMGKT. ATP is bound at residue lysine 231. The region spanning 340 to 406 is the S4 RNA-binding domain; it reads CSVVELLVDI…KKNYNRIIIK (67 aa).

It belongs to the class-I aminoacyl-tRNA synthetase family. TyrS type 1 subfamily. In terms of assembly, homodimer.

The protein localises to the cytoplasm. The enzyme catalyses tRNA(Tyr) + L-tyrosine + ATP = L-tyrosyl-tRNA(Tyr) + AMP + diphosphate + H(+). In terms of biological role, catalyzes the attachment of tyrosine to tRNA(Tyr) in a two-step reaction: tyrosine is first activated by ATP to form Tyr-AMP and then transferred to the acceptor end of tRNA(Tyr). The polypeptide is Tyrosine--tRNA ligase (Clostridium kluyveri (strain NBRC 12016)).